A 187-amino-acid polypeptide reads, in one-letter code: uncharacterized protein (187 aa).

4 helical membrane passes run I29–I50, F70–Y92, I128–R147, and L154–L176.

It is found in the cell membrane. This is an uncharacterized protein from Archaeoglobus fulgidus (strain ATCC 49558 / DSM 4304 / JCM 9628 / NBRC 100126 / VC-16).